An 874-amino-acid polypeptide reads, in one-letter code: Alanine--tRNA ligase (874 aa).

Positions 565, 569, 666, and 670 each coordinate Zn(2+).

It belongs to the class-II aminoacyl-tRNA synthetase family. The cofactor is Zn(2+).

Its subcellular location is the cytoplasm. It catalyses the reaction tRNA(Ala) + L-alanine + ATP = L-alanyl-tRNA(Ala) + AMP + diphosphate. Catalyzes the attachment of alanine to tRNA(Ala) in a two-step reaction: alanine is first activated by ATP to form Ala-AMP and then transferred to the acceptor end of tRNA(Ala). Also edits incorrectly charged Ser-tRNA(Ala) and Gly-tRNA(Ala) via its editing domain. This Polynucleobacter asymbioticus (strain DSM 18221 / CIP 109841 / QLW-P1DMWA-1) (Polynucleobacter necessarius subsp. asymbioticus) protein is Alanine--tRNA ligase.